Reading from the N-terminus, the 176-residue chain is ATP-dependent protease subunit HslV (176 aa).

Thr5 is a catalytic residue. Residues Ala161, Cys164, and Thr167 each coordinate Na(+).

This sequence belongs to the peptidase T1B family. HslV subfamily. As to quaternary structure, a double ring-shaped homohexamer of HslV is capped on each side by a ring-shaped HslU homohexamer. The assembly of the HslU/HslV complex is dependent on binding of ATP.

It is found in the cytoplasm. It carries out the reaction ATP-dependent cleavage of peptide bonds with broad specificity.. Its activity is regulated as follows. Allosterically activated by HslU binding. In terms of biological role, protease subunit of a proteasome-like degradation complex believed to be a general protein degrading machinery. This is ATP-dependent protease subunit HslV from Pelotomaculum thermopropionicum (strain DSM 13744 / JCM 10971 / SI).